Reading from the N-terminus, the 1207-residue chain is AP-3 complex subunit delta-1 (1207 aa).

The residue at position 2 (Ala-2) is an N-acetylalanine. 9 HEAT repeats span residues 34–71 (KYIS…LGYD), 142–179 (DLAR…KYPE), 180–216 (SLRP…RNPK), 218–254 (YLSL…LEPR), 257–296 (KKLI…GMPN), 298–336 (SASI…THPK), 337–373 (SVQA…KKNL), 375–409 (EIVK…QSNY), and 521–558 (VYVQ…ERLP). Disordered regions lie at residues 630–695 (PLSD…RYQD) and 731–970 (RRHR…EEPL). Phosphoserine occurs at positions 632, 634, and 636. Positions 648–675 (EEQRHTKPRAPEADEQELARRREARRQE) are enriched in basic and acidic residues. Positions 659–679 (EADEQELARRREARRQEQANN) form a coiled coil. Residue Ser-688 is modified to Phosphoserine. Residues 725-752 (VKLEEERRHRQRLEKDKRKKKKRERERR) are a coiled coil. Positions 731-740 (RRHRQRLEKD) are enriched in basic and acidic residues. Over residues 741–759 (KRKKKKRERERRGTRRHSS) the composition is skewed to basic residues. A phosphoserine mark is found at Ser-758 and Ser-759. Residue Thr-762 is modified to Phosphothreonine. 3 positions are modified to phosphoserine: Ser-764, Ser-788, and Ser-829. A compositionally biased stretch (acidic residues) spans 777–794 (VTEEMPENALPSDEDDKD). Residues 795-840 (PNDPYRALDIDLDKPLADSEKLPVQKHRNAETSKSPEKEDVPLVEK) show a composition bias toward basic and acidic residues. A compositionally biased stretch (basic residues) spans 841-854 (KSKKPKKKEKKHKE). Positions 846 to 870 (KKKEKKHKEKEREKKKKEVEKGEDL) form a coiled coil. Composition is skewed to basic and acidic residues over residues 855–869 (KERE…KGED) and 899–908 (EGQEEPRGEE). Residues 923–933 (PSKHKKKKHKK) show a composition bias toward basic residues. The segment covering 952-969 (ADEEAAEPVENGTLEEEP) has biased composition (acidic residues).

It belongs to the adaptor complexes large subunit family. AP-3 associates with the BLOC-1 complex. Adaptor protein complex 3 (AP-3) is a heterotetramer composed of two large adaptins (delta-type subunit AP3D1 and beta-type subunit AP3B1 or AP3B2), a medium adaptin (mu-type subunit AP3M1 or AP3M2) and a small adaptin (sigma-type subunit APS1 or AP3S2). Interacts with SLC30A2. Interacts with CLN3 (via dileucine motif); this interaction facilitates lysosomal targeting.

It localises to the cytoplasm. The protein localises to the golgi apparatus membrane. Its function is as follows. Part of the AP-3 complex, an adaptor-related complex which is not clathrin-associated. The complex is associated with the Golgi region as well as more peripheral structures. It facilitates the budding of vesicles from the Golgi membrane and may be directly involved in trafficking to lysosomes. Involved in process of CD8+ T-cell and NK cell degranulation. In concert with the BLOC-1 complex, AP-3 is required to target cargos into vesicles assembled at cell bodies for delivery into neurites and nerve terminals. The chain is AP-3 complex subunit delta-1 (AP3D1) from Bos taurus (Bovine).